The chain runs to 107 residues: Thioredoxin (107 aa).

The Thioredoxin domain occupies 2–107; the sequence is SVEAVVKQVD…GIRELIQANA (106 aa). Residues C34 and C37 each act as nucleophile in the active site. C34 and C37 are oxidised to a cystine.

It belongs to the thioredoxin family.

Its function is as follows. Participates in various redox reactions through the reversible oxidation of its active center dithiol to a disulfide and catalyzes dithiol-disulfide exchange reactions. The sequence is that of Thioredoxin (TRX) from Echinococcus granulosus (Hydatid tapeworm).